The primary structure comprises 93 residues: Co-chaperonin GroES (93 aa).

Belongs to the GroES chaperonin family. In terms of assembly, heptamer of 7 subunits arranged in a ring. Interacts with the chaperonin GroEL.

The protein resides in the cytoplasm. Together with the chaperonin GroEL, plays an essential role in assisting protein folding. The GroEL-GroES system forms a nano-cage that allows encapsulation of the non-native substrate proteins and provides a physical environment optimized to promote and accelerate protein folding. GroES binds to the apical surface of the GroEL ring, thereby capping the opening of the GroEL channel. The chain is Co-chaperonin GroES from Geobacillus kaustophilus (strain HTA426).